Here is a 191-residue protein sequence, read N- to C-terminus: Fe/S biogenesis protein NfuA (191 aa).

Residues Cys-149 and Cys-152 each coordinate [4Fe-4S] cluster.

Belongs to the NfuA family. Homodimer. [4Fe-4S] cluster serves as cofactor.

Involved in iron-sulfur cluster biogenesis. Binds a 4Fe-4S cluster, can transfer this cluster to apoproteins, and thereby intervenes in the maturation of Fe/S proteins. Could also act as a scaffold/chaperone for damaged Fe/S proteins. The sequence is that of Fe/S biogenesis protein NfuA from Escherichia coli O7:K1 (strain IAI39 / ExPEC).